The primary structure comprises 486 residues: Probable glycine dehydrogenase (decarboxylating) subunit 2 (486 aa).

K269 carries the post-translational modification N6-(pyridoxal phosphate)lysine.

This sequence belongs to the GcvP family. C-terminal subunit subfamily. In terms of assembly, the glycine cleavage system is composed of four proteins: P, T, L and H. In this organism, the P 'protein' is a heterodimer of two subunits. It depends on pyridoxal 5'-phosphate as a cofactor.

The catalysed reaction is N(6)-[(R)-lipoyl]-L-lysyl-[glycine-cleavage complex H protein] + glycine + H(+) = N(6)-[(R)-S(8)-aminomethyldihydrolipoyl]-L-lysyl-[glycine-cleavage complex H protein] + CO2. The glycine cleavage system catalyzes the degradation of glycine. The P protein binds the alpha-amino group of glycine through its pyridoxal phosphate cofactor; CO(2) is released and the remaining methylamine moiety is then transferred to the lipoamide cofactor of the H protein. This Chlorobaculum tepidum (strain ATCC 49652 / DSM 12025 / NBRC 103806 / TLS) (Chlorobium tepidum) protein is Probable glycine dehydrogenase (decarboxylating) subunit 2.